A 364-amino-acid polypeptide reads, in one-letter code: D-alanine--D-alanine ligase (364 aa).

Positions 134–347 (RRLACINGLK…YPDLLDELIN (214 aa)) constitute an ATP-grasp domain. Residue 167–222 (ASEFGWPLFVKPCSLGSSVGIHKANNMDELNAAVADALRYDEEILVEEFIVGREIE) coordinates ATP. Asp300, Glu314, and Asn316 together coordinate Mg(2+).

The protein belongs to the D-alanine--D-alanine ligase family. The cofactor is Mg(2+). Requires Mn(2+) as cofactor.

It is found in the cytoplasm. It catalyses the reaction 2 D-alanine + ATP = D-alanyl-D-alanine + ADP + phosphate + H(+). The protein operates within cell wall biogenesis; peptidoglycan biosynthesis. In terms of biological role, cell wall formation. The chain is D-alanine--D-alanine ligase from Legionella pneumophila (strain Paris).